A 101-amino-acid polypeptide reads, in one-letter code: Small ribosomal subunit protein uS14 (101 aa).

The segment covering 1 to 10 (MAKKSAIEKN) has biased composition (basic and acidic residues). The segment at 1–23 (MAKKSAIEKNNRRKKMTKNAAPK) is disordered. A compositionally biased stretch (basic residues) spans 11–23 (NRRKKMTKNAAPK).

It belongs to the universal ribosomal protein uS14 family. As to quaternary structure, part of the 30S ribosomal subunit. Contacts proteins S3 and S10.

In terms of biological role, binds 16S rRNA, required for the assembly of 30S particles and may also be responsible for determining the conformation of the 16S rRNA at the A site. This chain is Small ribosomal subunit protein uS14, found in Rhodopseudomonas palustris (strain TIE-1).